Consider the following 343-residue polypeptide: Protein RecA (343 aa).

66–73 (GPESSGKT) serves as a coordination point for ATP.

This sequence belongs to the RecA family.

It localises to the cytoplasm. Functionally, can catalyze the hydrolysis of ATP in the presence of single-stranded DNA, the ATP-dependent uptake of single-stranded DNA by duplex DNA, and the ATP-dependent hybridization of homologous single-stranded DNAs. It interacts with LexA causing its activation and leading to its autocatalytic cleavage. The chain is Protein RecA from Dechloromonas aromatica (strain RCB).